The chain runs to 575 residues: Muellerian-inhibiting factor (575 aa).

Residues 1-24 (MPGPSLSLALVLSAMGALLRPGTP) form the signal peptide. Positions 25–466 (REEVFSTSAL…ERSGSARAQR (442 aa)) are excised as a propeptide. N-linked (GlcNAc...) asparagine glycans are attached at residues Asn78 and Asn344. 3 disulfides stabilise this stretch: Cys477–Cys541, Cys503–Cys572, and Cys507–Cys574.

Belongs to the TGF-beta family. As to quaternary structure, homodimer; disulfide-linked. In terms of processing, preproprotein is proteolytically processed to generate N- and C-terminal cleavage products that homodimerize and associate to form a biologically active non-covalent complex. Binding of the non-covalent complex to AMHR2 induces dissociation of the pro-region from the mature C-terminal dimer. The N-terminal portion of the protein, despite having no intrinsic activity, has the role of amplifying the activity of the C-terminus. In terms of tissue distribution, expressed in fetal testis and adult ovaries.

The protein resides in the secreted. Its function is as follows. Plays an important role in several reproductive functions. Induces Muellerian duct regression during male fetal sexual differentiation and plays a role in Leydig cell differentiation and function. In female acts as a negative regulator of the primordial to primary follicle transition and decreases FSH sensitivity of growing follicles. AMH signals by binding to a specific type-II receptor, AMHR2, that heterodimerizes with type-I receptors (ACVR1 and BMPR1A), and recruiting SMAD proteins that are translocated to the nucleus to regulate target gene expression. The protein is Muellerian-inhibiting factor (AMH) of Bos taurus (Bovine).